The following is a 206-amino-acid chain: Dephospho-CoA kinase (206 aa).

In terms of domain architecture, DPCK spans 4–204 (VIGLTGGIAS…EGYIESHSED (201 aa)). 12–17 (ASGKST) serves as a coordination point for ATP.

The protein belongs to the CoaE family.

Its subcellular location is the cytoplasm. It catalyses the reaction 3'-dephospho-CoA + ATP = ADP + CoA + H(+). The protein operates within cofactor biosynthesis; coenzyme A biosynthesis; CoA from (R)-pantothenate: step 5/5. Functionally, catalyzes the phosphorylation of the 3'-hydroxyl group of dephosphocoenzyme A to form coenzyme A. The protein is Dephospho-CoA kinase of Staphylococcus saprophyticus subsp. saprophyticus (strain ATCC 15305 / DSM 20229 / NCIMB 8711 / NCTC 7292 / S-41).